The primary structure comprises 144 residues: Transcriptional regulator MraZ (144 aa).

SpoVT-AbrB domains are found at residues 5 to 47 (TYTP…PRAE) and 77 to 120 (TDEQ…DAQA).

This sequence belongs to the MraZ family. Forms oligomers.

The protein localises to the cytoplasm. It is found in the nucleoid. The sequence is that of Transcriptional regulator MraZ from Mycolicibacterium vanbaalenii (strain DSM 7251 / JCM 13017 / BCRC 16820 / KCTC 9966 / NRRL B-24157 / PYR-1) (Mycobacterium vanbaalenii).